The sequence spans 208 residues: Pyrrolidone-carboxylate peptidase (208 aa).

Active-site residues include E79, C142, and H166.

The protein belongs to the peptidase C15 family. In terms of assembly, homotetramer made of two disulfide-linked dimers.

The protein resides in the cytoplasm. It carries out the reaction Release of an N-terminal pyroglutamyl group from a polypeptide, the second amino acid generally not being Pro.. Removes 5-oxoproline from various penultimate amino acid residues except L-proline. The polypeptide is Pyrrolidone-carboxylate peptidase (pcp) (Pyrococcus furiosus (strain ATCC 43587 / DSM 3638 / JCM 8422 / Vc1)).